The chain runs to 361 residues: Gibberellin 20 oxidase 1-D (361 aa).

The Fe2OG dioxygenase domain maps to 199–299 (GNDSIMRLNY…RKSLAFFLCP (101 aa)). The Fe cation site is built by H224, D226, and H280. R290 is an active-site residue.

Belongs to the iron/ascorbate-dependent oxidoreductase family. GA20OX subfamily. It depends on Fe cation as a cofactor. The cofactor is L-ascorbate. As to expression, expressed in nodes and the ear of the elongating stem.

It carries out the reaction gibberellin A12 + 2 2-oxoglutarate + 3 O2 + H(+) = gibberellin A9 + 2 succinate + 3 CO2 + 2 H2O. It catalyses the reaction gibberellin A53 + 2 2-oxoglutarate + 3 O2 + H(+) = gibberellin A20 + 2 succinate + 3 CO2 + 2 H2O. In terms of biological role, key oxidase enzyme in the biosynthesis of gibberellin that catalyzes the conversion of GA12 and GA53 to GA9 and GA20 respectively, via a three-step oxidation at C-20 of the GA skeleton. This Triticum aestivum (Wheat) protein is Gibberellin 20 oxidase 1-D (GA20ox1D).